The chain runs to 581 residues: MYRRNGLPASVSITSRNTQDSSSSESLDGRSLDSAKSFDAVVFDMLKVTPEEFASQITLMDAPVFKAIQPEELASCGWNKKEKHSLSPNVVAFTRRFNQVSFWAVREILTAQTLKIRAEILGHFIKIAKKLLELNNLHSLVSVVSALQSAPIFRLSKTWALISRKDKATFEKLDFLTSKEENYNRMREYTRSLKMAPCIPYLGIYLFDMTYIDSAYPASDSIIETEQRTNQMNNLLRIISDLQVSCKYDHLITLPHVQKYLMSVRYIEELQKFVEDDNYSLSLKIEPGNSSPRLVSSKEDLGGPSEVSMSVRYNRRPTCPDTSVVAHLPTPPPARHRKSHSLGNNMMCQFGVVESKSATFPEKEKARHLLDDSFLESHSPVRNHTHDSVFTNGISLGSRESSFSDELSSTVERGRMYATLGPNWRVPICNSPRSRSYIYSTPGAVSSYECSTLSSITIEGPLRRKTLMKEGKKPTLSSWKRYWIVLSGSILIYFGSKALRANERRHYKSRPCKKITLTGWMVVLPDNPEHPNIFQLTDPDRGNVYKFQTGSRFSAIIWHRHLAEACRSTRPQMPANLMSFE.

The tract at residues 1 to 31 is disordered; the sequence is MYRRNGLPASVSITSRNTQDSSSSESLDGRS. One can recognise a Ras-GEF domain in the interval 49-288; it reads TPEEFASQIT…YSLSLKIEPG (240 aa). Residues 320–339 form a disordered region; the sequence is PDTSVVAHLPTPPPARHRKS. The PXXP signature appears at 329-332; that stretch reads PTPP. Residues 455-567 form the PH domain; it reads SITIEGPLRR…WHRHLAEACR (113 aa).

Its subcellular location is the cytoplasm. The protein localises to the cell membrane. Guanine nucleotide exchange factor. May be involved in cytoskeletal organization. The chain is Ras-specific guanine nucleotide-releasing factor RalGPS1 (ralgps1) from Danio rerio (Zebrafish).